Reading from the N-terminus, the 215-residue chain is ATP-dependent Clp protease proteolytic subunit 1 (215 aa).

Ser111 functions as the Nucleophile in the catalytic mechanism. His136 is a catalytic residue.

This sequence belongs to the peptidase S14 family. Fourteen ClpP subunits assemble into 2 heptameric rings which stack back to back to give a disk-like structure with a central cavity, resembling the structure of eukaryotic proteasomes.

It localises to the cytoplasm. The catalysed reaction is Hydrolysis of proteins to small peptides in the presence of ATP and magnesium. alpha-casein is the usual test substrate. In the absence of ATP, only oligopeptides shorter than five residues are hydrolyzed (such as succinyl-Leu-Tyr-|-NHMec, and Leu-Tyr-Leu-|-Tyr-Trp, in which cleavage of the -Tyr-|-Leu- and -Tyr-|-Trp bonds also occurs).. Functionally, cleaves peptides in various proteins in a process that requires ATP hydrolysis. Has a chymotrypsin-like activity. Plays a major role in the degradation of misfolded proteins. The protein is ATP-dependent Clp protease proteolytic subunit 1 of Gluconobacter oxydans (strain 621H) (Gluconobacter suboxydans).